Reading from the N-terminus, the 372-residue chain is Methenyltetrahydrofolate synthase domain-containing protein (372 aa).

Residues 246 to 258 are compositionally biased toward basic and acidic residues; sequence KQAGKDVTLRDEP. The tract at residues 246–289 is disordered; that stretch reads KQAGKDVTLRDEPGSQQPAPGPIRRPQDRPQTGSRGGSRSPLQG. The RRM domain maps to 296–369; sequence ATVCVGNLPF…NALRVSLGQQ (74 aa).

This Mus musculus (Mouse) protein is Methenyltetrahydrofolate synthase domain-containing protein (Mthfsd).